A 4655-amino-acid polypeptide reads, in one-letter code: Low-density lipoprotein receptor-related protein 2 (4655 aa).

An N-terminal signal peptide occupies residues 1–25 (MDRGPAAVACTLLLALVACLAPASG). Over 26–4423 (QECDSAHFRC…FSKGISPGTT (4398 aa)) the chain is Extracellular. LDL-receptor class A domains are found at residues 27–63 (ECDS…IGCA), 66–104 (TCQQ…QDCS), 107–143 (TCSS…NDCQ), 146–180 (TCEQ…INCT), 182–218 (ICLH…HACN), 221–257 (TCGG…DGCE), and 265–308 (KCSP…KYCS). Disulfide bonds link cysteine 28/cysteine 40, cysteine 35/cysteine 53, cysteine 47/cysteine 62, cysteine 67/cysteine 80, cysteine 74/cysteine 93, cysteine 87/cysteine 103, cysteine 108/cysteine 120, cysteine 115/cysteine 133, cysteine 127/cysteine 142, cysteine 147/cysteine 157, cysteine 152/cysteine 170, cysteine 164/cysteine 179, cysteine 183/cysteine 195, cysteine 190/cysteine 208, cysteine 202/cysteine 217, cysteine 222/cysteine 234, cysteine 229/cysteine 247, cysteine 241/cysteine 256, cysteine 266/cysteine 279, cysteine 273/cysteine 292, and cysteine 286/cysteine 307. N-linked (GlcNAc...) asparagine glycosylation is found at asparagine 159 and asparagine 178. N-linked (GlcNAc...) asparagine glycosylation is found at asparagine 299, asparagine 300, asparagine 341, asparagine 388, and asparagine 463. 8 LDL-receptor class B repeats span residues 436-478 (QRVF…DWVN), 479-521 (NKIY…DPTV), 522-568 (GYLF…DMIS), 569-613 (KRVY…FEGQ), 753-795 (STIF…DWIS), 796-837 (KNLY…HPFA), 838-881 (GYLF…DWAA), and 882-925 (SRLY…FGEH). Asparagine 866 is a glycosylation site (N-linked (GlcNAc...) asparagine). One can recognise an LDL-receptor class A 8 domain in the interval 1025–1061 (QCGLFSFPCKNGRCVPNYYLCDGVDDCHDNSDEQLCG). 3 cysteine pairs are disulfide-bonded: cysteine 1026–cysteine 1038, cysteine 1033–cysteine 1051, and cysteine 1045–cysteine 1060. N-linked (GlcNAc...) asparagine glycosylation is present at asparagine 1064. 7 LDL-receptor class A domains span residues 1066-1102 (TCSS…HNCP), 1108-1144 (SCLD…KNCN), 1148-1184 (TCQP…VGCV), 1186-1223 (NCTA…AGCP), 1229-1267 (MCHS…NACV), 1270-1306 (TCPS…KDCP), and 1304-1349 (DCPT…PLCN). 6 cysteine pairs are disulfide-bonded: cysteine 1067-cysteine 1079, cysteine 1074-cysteine 1092, cysteine 1086-cysteine 1101, cysteine 1109-cysteine 1121, cysteine 1116-cysteine 1134, and cysteine 1128-cysteine 1143. Ca(2+) contacts are provided by tryptophan 1126, aspartate 1129, aspartate 1131, aspartate 1133, aspartate 1139, and glutamate 1140. Residue asparagine 1144 is glycosylated (N-linked (GlcNAc...) asparagine). 3 cysteine pairs are disulfide-bonded: cysteine 1149–cysteine 1161, cysteine 1156–cysteine 1174, and cysteine 1168–cysteine 1183. Residue asparagine 1186 is glycosylated (N-linked (GlcNAc...) asparagine). 12 disulfide bridges follow: cysteine 1187/cysteine 1200, cysteine 1194/cysteine 1213, cysteine 1207/cysteine 1222, cysteine 1230/cysteine 1243, cysteine 1237/cysteine 1256, cysteine 1250/cysteine 1266, cysteine 1271/cysteine 1283, cysteine 1278/cysteine 1296, cysteine 1290/cysteine 1305, cysteine 1305/cysteine 1325, cysteine 1312/cysteine 1338, and cysteine 1332/cysteine 1348. 5 residues coordinate Ca(2+): aspartate 1208, valine 1210, aspartate 1212, aspartate 1218, and glutamate 1219. N-linked (GlcNAc...) asparagine glycans are attached at residues asparagine 1327, asparagine 1340, and asparagine 1383. The 40-residue stretch at 1390-1429 (DIDECDILGSCSQHCYNMRGSFRCSCDTGYMLESDGRTCK) folds into the EGF-like 1; calcium-binding domain. Intrachain disulfides connect cysteine 1394–cysteine 1404, cysteine 1400–cysteine 1413, and cysteine 1415–cysteine 1428. Asparagine 1464, asparagine 1496, and asparagine 1550 each carry an N-linked (GlcNAc...) asparagine glycan. LDL-receptor class B repeat units lie at residues 1478-1520 (GRIF…DWVG), 1521-1563 (RNLY…DPRM), 1566-1609 (HLLF…DYPN), 1610-1654 (RLLY…FEDS), and 1655-1695 (VYWT…VHPS). N-linked (GlcNAc...) asparagine glycosylation is present at asparagine 1675. The EGF-like 2 domain occupies 1700–1741 (SVNPCAFSRCSHLCLLSSQGPHFYSCVCPSGWSLSPDLLNCL). 3 cysteine pairs are disulfide-bonded: cysteine 1704–cysteine 1713, cysteine 1709–cysteine 1725, and cysteine 1727–cysteine 1740. 5 LDL-receptor class B repeats span residues 1790-1832 (QYIY…DWIS), 1833-1882 (RNLY…DPAR), 1883-1930 (GKLY…DIEE), 1931-1972 (QKLY…HDSF), and 1973-2013 (LYYT…YHRR). Asparagine 1810 is a glycosylation site (N-linked (GlcNAc...) asparagine). N-linked (GlcNAc...) asparagine glycosylation is present at asparagine 2055. LDL-receptor class B repeat units follow at residues 2107–2156 (GFIY…DWVA), 2157–2201 (GNLY…DPKN), 2202–2245 (RYLF…DRSD), 2246–2289 (GYVY…FENS), 2431–2477 (DRIY…DWIT), 2478–2518 (RRIY…DPCQ), 2519–2562 (GYLY…DYEE), 2563–2604 (DLLY…YGQY), and 2605–2646 (IYWT…VVKN). 2 N-linked (GlcNAc...) asparagine glycosylation sites follow: asparagine 2177 and asparagine 2224. Residues asparagine 2499 and asparagine 2547 are each glycosylated (N-linked (GlcNAc...) asparagine). LDL-receptor class A domains lie at 2699–2737 (RCGA…SVCA), 2740–2776 (TCSP…AGCL), 2779–2818 (DCNA…KNCP), 2821–2860 (TCQS…TYCT), 2863–2900 (TCSS…ASCG), 2905–2944 (TCLA…HQCQ), 2947–2989 (NCSD…QNCT), 2992–3028 (TCSE…RGCL), 3031–3069 (TCQQ…HLCH), and 3074–3110 (TCPP…KGCG). 18 disulfides stabilise this stretch: cysteine 2700-cysteine 2712, cysteine 2707-cysteine 2725, cysteine 2719-cysteine 2736, cysteine 2741-cysteine 2753, cysteine 2748-cysteine 2766, cysteine 2760-cysteine 2775, cysteine 2780-cysteine 2793, cysteine 2788-cysteine 2806, cysteine 2800-cysteine 2817, cysteine 2822-cysteine 2835, cysteine 2829-cysteine 2848, cysteine 2842-cysteine 2859, cysteine 2864-cysteine 2876, cysteine 2871-cysteine 2889, cysteine 2883-cysteine 2899, cysteine 2906-cysteine 2918, cysteine 2913-cysteine 2931, and cysteine 2925-cysteine 2943. The N-linked (GlcNAc...) asparagine glycan is linked to asparagine 2781. Residues asparagine 2809 and asparagine 2810 are each glycosylated (N-linked (GlcNAc...) asparagine). Asparagine 2947 carries an N-linked (GlcNAc...) asparagine glycan. Cystine bridges form between cysteine 2948–cysteine 2965, cysteine 2955–cysteine 2978, cysteine 2972–cysteine 2988, cysteine 2993–cysteine 3005, cysteine 3000–cysteine 3018, cysteine 3012–cysteine 3027, cysteine 3032–cysteine 3044, cysteine 3039–cysteine 3057, cysteine 3051–cysteine 3068, cysteine 3075–cysteine 3087, cysteine 3082–cysteine 3100, cysteine 3094–cysteine 3109, cysteine 3114–cysteine 3126, cysteine 3122–cysteine 3135, cysteine 3137–cysteine 3150, cysteine 3156–cysteine 3167, cysteine 3163–cysteine 3176, and cysteine 3178–cysteine 3191. Asparagine 2987 carries N-linked (GlcNAc...) asparagine glycosylation. Residues 3110–3151 (GINECHDPSISGCDHNCTDTLTSFYCSCRPGYKLMSDKRTCV) enclose the EGF-like 3 domain. Asparagine 3125 carries an N-linked (GlcNAc...) asparagine glycan. The EGF-like 4; calcium-binding domain maps to 3152-3192 (DIDECTEMPFVCSQKCENVIGSYICKCAPGYLREPDGKTCR). Residues asparagine 3211, asparagine 3257, asparagine 3315, and asparagine 3355 are each glycosylated (N-linked (GlcNAc...) asparagine). 5 LDL-receptor class B repeats span residues 3239–3281 (KRLY…DWVS), 3282–3324 (RKLY…DNPR), 3333–3376 (GYLY…DYTN), 3377–3419 (DLLY…FEDT), and 3420–3460 (IYWT…YHPY). Asparagine 3446 carries N-linked (GlcNAc...) asparagine glycosylation. 11 LDL-receptor class A domains span residues 3511 to 3549 (MCSS…ALCP), 3552 to 3590 (FCRL…LLCE), 3593 to 3631 (HCDS…SHCA), 3634 to 3672 (TCRP…EECM), 3677 to 3715 (LCDN…QGCE), 3718 to 3755 (TCHP…ENCA), 3758 to 3794 (ECTE…RDCE), 3797 to 3833 (TCHP…ADCP), 3841 to 3879 (YCQA…HLCL), 3882 to 3921 (PCNS…EHCR), and 3927 to 3963 (PCTE…LGCN). Cystine bridges form between cysteine 3512/cysteine 3525, cysteine 3519/cysteine 3538, cysteine 3532/cysteine 3548, cysteine 3553/cysteine 3565, cysteine 3560/cysteine 3578, cysteine 3572/cysteine 3589, cysteine 3594/cysteine 3606, cysteine 3601/cysteine 3619, cysteine 3613/cysteine 3630, cysteine 3635/cysteine 3647, cysteine 3642/cysteine 3660, cysteine 3654/cysteine 3671, cysteine 3678/cysteine 3692, cysteine 3686/cysteine 3705, cysteine 3699/cysteine 3714, cysteine 3719/cysteine 3732, cysteine 3727/cysteine 3745, cysteine 3739/cysteine 3754, cysteine 3759/cysteine 3771, cysteine 3766/cysteine 3784, cysteine 3778/cysteine 3793, cysteine 3798/cysteine 3810, cysteine 3805/cysteine 3823, cysteine 3817/cysteine 3832, cysteine 3842/cysteine 3854, cysteine 3849/cysteine 3867, cysteine 3861/cysteine 3878, cysteine 3883/cysteine 3896, cysteine 3891/cysteine 3909, cysteine 3903/cysteine 3920, cysteine 3928/cysteine 3940, cysteine 3935/cysteine 3953, and cysteine 3947/cysteine 3962. Residue asparagine 3564 is glycosylated (N-linked (GlcNAc...) asparagine). Asparagine 3680 carries an N-linked (GlcNAc...) asparagine glycan. Asparagine 3978 carries N-linked (GlcNAc...) asparagine glycosylation. Residues 4007–4048 (DINECEQFGTCPQHCRNTKGSYECVCADGFTSMSDRPGKRCA) enclose the EGF-like 5; calcium-binding domain. 3 disulfides stabilise this stretch: cysteine 4011-cysteine 4021, cysteine 4017-cysteine 4030, and cysteine 4032-cysteine 4047. N-linked (GlcNAc...) asparagine glycosylation occurs at asparagine 4068. 3 LDL-receptor class B repeats span residues 4154-4196 (RHIY…NPKL), 4197-4240 (GLMF…DYLN), and 4242-4283 (DRIY…FEDQ). The N-linked (GlcNAc...) asparagine glycan is linked to asparagine 4327. One can recognise an EGF-like 6 domain in the interval 4377–4411 (LPPPCRCMHGGNCYFDETDLPKCKCPSGYTGKYCE). Disulfide bonds link cysteine 4381/cysteine 4389, cysteine 4383/cysteine 4399, and cysteine 4401/cysteine 4410. A helical membrane pass occupies residues 4424-4446 (AVAVLLTILLIVVIGALAIAGFF). Residues 4447–4655 (HYRRTGSLLP…ANLVKEDSEV (209 aa)) lie on the Cytoplasmic side of the membrane. An SH3-binding motif is present at residues 4453–4462 (SLLPALPKLP). Residues 4456–4461 (PALPKL) carry the PxLPxI/L motif 1; mediates interaction with ANKRA2 motif. The PxLPxI/L motif 2; mediates interaction with ANKRA2 motif lies at 4459 to 4464 (PKLPSL). Phosphoserine occurs at positions 4463 and 4466. An Endocytosis signal motif is present at residues 4521 to 4526 (FENPMY). Residues 4550 to 4574 (KNYGSPINPSEIVPETNPTSPAADG) are disordered. Polar residues predominate over residues 4565–4574 (TNPTSPAADG). Serine 4569 carries the post-translational modification Phosphoserine. An interaction with DAB2 region spans residues 4589-4602 (QTTNFENPIYAQME). Residues 4595–4598 (NPIY) carry the NPXY motif motif. The SH2-binding signature appears at 4598–4601 (YAQM). A disordered region spans residues 4601 to 4655 (MENEQKESVAATPPPSPSLPAKPKPPSRRDPTPTYSATEDTFKDTANLVKEDSEV). The SH3-binding motif lies at 4611-4622 (ATPPPSPSLPAK). Residues 4612–4624 (TPPPSPSLPAKPK) show a composition bias toward pro residues. A Phosphoserine modification is found at serine 4616. At threonine 4632 the chain carries Phosphothreonine. Position 4653 is a phosphoserine (serine 4653).

This sequence belongs to the LDLR family. As to quaternary structure, binds plasminogen, extracellular matrix components, plasminogen activator-plasminogen activator inhibitor type I complex, apolipoprotein E-enriched beta-VLDL, lipoprotein lipase, lactoferrin, CLU/clusterin and calcium. Forms a multimeric complex together with LRPAP1. Interacts (via PxLPxI/L motif) with ANKRA2 (via ankyrin repeats). Interacts with LRP2BP. Interacts (via NPXY motif) with DAB2; the interaction is not affected by tyrosine phosphorylation of the NPXY motif. Interacts with MB. Interacts with BMP4. Interacts with the Sonic hedgehog protein N-product which is the active product of SHH. Interacts with CST3 in a calcium-dependent manner. Interacts with the vitamin-D binding protein GC/DBP. Interacts with sex hormone-binding protein SHBG. Interacts with angiotensin-2. Also interacts with angiotensin 1-7. Interacts with APOM. Interacts with selenoprotein SEPP1. Interacts with LEP. Interacts with ALB. Interacts with the antiapoptotic protein BIRC5/survivin. Interacts with matrix metalloproteinase MMP2 in complex with metalloproteinase inhibitor TIMP1. In neurons, forms a trimeric complex with APP and APPB1/FE65. Interacts with LDLRAP1/ARH; mediates trafficking of LRP2 to the endocytic recycling compartment. Does not interact with beta-amyloid protein 40 alone but interacts with the complex composed of beta-amyloid protein 40 and CLU/APOJ. Interacts with MDK. A fraction undergoes proteolytic cleavage of the extracellular domain at the cell membrane to generate a cytoplasmic tail fragment. This is internalized into the early endosome from where it trafficks in an LDLRAP1/ARH-dependent manner to the endocytic recycling compartment (ERC). In the ERC, it is further cleaved by gamma-secretase to release a fragment which translocates to the nucleus and mediates transcriptional repression. In terms of processing, N-glycosylation is required for ligand binding. Expressed in first and third trimester cytotrophoblasts in the placenta (at protein level). Absorptive epithelia, including renal proximal tubules.

It localises to the apical cell membrane. The protein resides in the endosome lumen. The protein localises to the membrane. Its subcellular location is the coated pit. It is found in the cell projection. It localises to the dendrite. The protein resides in the axon. In terms of biological role, multiligand endocytic receptor. Acts together with CUBN to mediate endocytosis of high-density lipoproteins. Mediates receptor-mediated uptake of polybasic drugs such as aprotinin, aminoglycosides and polymyxin B. In the kidney, mediates the tubular uptake and clearance of leptin. Also mediates transport of leptin across the blood-brain barrier through endocytosis at the choroid plexus epithelium. Endocytosis of leptin in neuronal cells is required for hypothalamic leptin signaling and leptin-mediated regulation of feeding and body weight. Mediates endocytosis and subsequent lysosomal degradation of CST3 in kidney proximal tubule cells. Mediates renal uptake of 25-hydroxyvitamin D3 in complex with the vitamin D3 transporter GC/DBP. Mediates renal uptake of metallothionein-bound heavy metals. Together with CUBN, mediates renal reabsorption of myoglobin. Mediates renal uptake and subsequent lysosomal degradation of APOM. Plays a role in kidney selenium homeostasis by mediating renal endocytosis of selenoprotein SEPP1. Mediates renal uptake of the antiapoptotic protein BIRC5/survivin which may be important for functional integrity of the kidney. Mediates renal uptake of matrix metalloproteinase MMP2 in complex with metalloproteinase inhibitor TIMP1. Mediates endocytosis of Sonic hedgehog protein N-product (ShhN), the active product of SHH. Also mediates ShhN transcytosis. In the embryonic neuroepithelium, mediates endocytic uptake and degradation of BMP4, is required for correct SHH localization in the ventral neural tube and plays a role in patterning of the ventral telencephalon. Required at the onset of neurulation to sequester SHH on the apical surface of neuroepithelial cells of the rostral diencephalon ventral midline and to control PTCH1-dependent uptake and intracellular trafficking of SHH. During neurulation, required in neuroepithelial cells for uptake of folate bound to the folate receptor FOLR1 which is necessary for neural tube closure. In the adult brain, negatively regulates BMP signaling in the subependymal zone which enables neurogenesis to proceed. In astrocytes, mediates endocytosis of ALB which is required for the synthesis of the neurotrophic factor oleic acid. Involved in neurite branching. During optic nerve development, required for SHH-mediated migration and proliferation of oligodendrocyte precursor cells. Mediates endocytic uptake and clearance of SHH in the retinal margin which protects retinal progenitor cells from mitogenic stimuli and keeps them quiescent. Plays a role in reproductive organ development by mediating uptake in reproductive tissues of androgen and estrogen bound to the sex hormone binding protein SHBG. Mediates endocytosis of angiotensin-2. Also mediates endocytosis of angiotensis 1-7. Binds to the complex composed of beta-amyloid protein 40 and CLU/APOJ and mediates its endocytosis and lysosomal degradation. Required for embryonic heart development. Required for normal hearing, possibly through interaction with estrogen in the inner ear. In Homo sapiens (Human), this protein is Low-density lipoprotein receptor-related protein 2.